We begin with the raw amino-acid sequence, 897 residues long: Leucine--tRNA ligase (897 aa).

Residues Pro49–His59 carry the 'HIGH' region motif. The 'KMSKS' region signature appears at Lys654–Ser658. Lys657 serves as a coordination point for ATP.

Belongs to the class-I aminoacyl-tRNA synthetase family.

It is found in the cytoplasm. The catalysed reaction is tRNA(Leu) + L-leucine + ATP = L-leucyl-tRNA(Leu) + AMP + diphosphate. This Methylibium petroleiphilum (strain ATCC BAA-1232 / LMG 22953 / PM1) protein is Leucine--tRNA ligase.